Consider the following 627-residue polypeptide: 1-deoxy-D-xylulose-5-phosphate synthase (627 aa).

Thiamine diphosphate contacts are provided by residues histidine 72 and 113–115 (GHS). Residue aspartate 144 participates in Mg(2+) binding. Thiamine diphosphate contacts are provided by residues 145–146 (GA), asparagine 173, tyrosine 283, and glutamate 366. Position 173 (asparagine 173) interacts with Mg(2+).

Belongs to the transketolase family. DXPS subfamily. In terms of assembly, homodimer. It depends on Mg(2+) as a cofactor. Thiamine diphosphate is required as a cofactor.

The catalysed reaction is D-glyceraldehyde 3-phosphate + pyruvate + H(+) = 1-deoxy-D-xylulose 5-phosphate + CO2. It participates in metabolic intermediate biosynthesis; 1-deoxy-D-xylulose 5-phosphate biosynthesis; 1-deoxy-D-xylulose 5-phosphate from D-glyceraldehyde 3-phosphate and pyruvate: step 1/1. In terms of biological role, catalyzes the acyloin condensation reaction between C atoms 2 and 3 of pyruvate and glyceraldehyde 3-phosphate to yield 1-deoxy-D-xylulose-5-phosphate (DXP). In Macrococcus caseolyticus (strain JCSC5402) (Macrococcoides caseolyticum), this protein is 1-deoxy-D-xylulose-5-phosphate synthase.